The primary structure comprises 409 residues: MFNTSTFVYIATTADTKGQELEYVRQIIANLGLPTVTVDLSTSSLPANPAADICAEEVAGYHPEGARAVFCPNRSHAITAMALAFERFLLTRHDIAALLGLGGSGGTAIITPAMQKLPIGLPKLMVSSMAAGDVSVYVGNSDIAMLYSVTDIAGLNRISRRVLSNAACQIAGAVRFATAHDIEEKPAVGLTMFGVTTPCIKMVVSALEPQWDCLVFHATGSGGRALEKLIDSRLLSAALDLTTTEVADYLFGGVLPCNEERFSAIARTGIPCILSCGALDMINFGPPETVPARYAERLIHQHNPQVTLVRTTPQENASIGRWIGEKMNACSGEVRFVIPGGGVSALDAPGQPFWDPQALAAFMQALESTLRPTNKRRLIKTAYHINDPRFAHIVTEQFQHIANPRLLSK.

It belongs to the UPF0261 family.

This chain is UPF0261 protein Spro_4740, found in Serratia proteamaculans (strain 568).